The following is a 761-amino-acid chain: Cytoplasmic export protein 1 (761 aa).

HEAT repeat units follow at residues 385–423 (IYPH…LNNE) and 498–534 (NTIA…LEKL). Disordered stretches follow at residues 660–692 (DDGW…IAPS) and 714–761 (STVT…DTNW). Polar residues-rich tracts occupy residues 680-692 (PQNS…IAPS) and 714-737 (STVT…SIRG). The span at 747–761 (GWDDDGDSDSWDTNW) shows a compositional bias: acidic residues. Serine 754 carries the post-translational modification Phosphoserine.

Associates with the nuclear pore complex (NPC). Interacts with GSP1, LOS1, MSN5, NUP116 and TEF2.

Its subcellular location is the cytoplasm. In terms of biological role, component of the nuclear tRNA export machinery that my collect tRNA from the nuclear tRNA export receptors of the aminoacylation-dependent export and may deliver aminoacylated tRNAs to the translation machinery pathway at the nuclear pore complex. In Saccharomyces cerevisiae (strain ATCC 204508 / S288c) (Baker's yeast), this protein is Cytoplasmic export protein 1 (CEX1).